Reading from the N-terminus, the 120-residue chain is Large ribosomal subunit protein uL18 (120 aa).

This sequence belongs to the universal ribosomal protein uL18 family. In terms of assembly, part of the 50S ribosomal subunit; part of the 5S rRNA/L5/L18/L25 subcomplex. Contacts the 5S and 23S rRNAs.

Its function is as follows. This is one of the proteins that bind and probably mediate the attachment of the 5S RNA into the large ribosomal subunit, where it forms part of the central protuberance. In Treponema denticola (strain ATCC 35405 / DSM 14222 / CIP 103919 / JCM 8153 / KCTC 15104), this protein is Large ribosomal subunit protein uL18.